The following is a 534-amino-acid chain: Hypothemycin biosynthesis cluster protein hpm4 (534 aa).

3 disordered regions span residues 34–61 (IEPAHSLEDEYSGQSGQGADDDPDSDGP), 110–130 (LQSPTTTASSAGSPSCAPLRL), and 236–287 (DGTG…KKCI). Composition is skewed to low complexity over residues 112–127 (SPTTTASSAGSPSCAP) and 258–275 (TVSSRQTRSRQAARACQT).

It participates in secondary metabolite biosynthesis. Its function is as follows. Part of the gene cluster that mediates the biosynthesis of hypothemycin, a resorcylic acid lactone (RAL) that irreversibly inhibits a subset of protein kinases with a conserved cysteine in the ATP binding site such as human ERK2. The first step is performed by both PKSs hmp3 and hmp8 and leads to the production of 7',8'-dehydrozearalenol (DHZ). The highly reducing PKS hpm8 synthesizes the reduced hexaketide (7S,11S,2E,8E)-7,11-dihydroxy-dodeca-2,8-dienoate, which is transferred downstream to the non-reducing PKS hpm3. Hpm3 then extends the reduced hexaketide to a nonaketide, after which regioselective cyclization and macrolactonization affords DHZ. The next step is the conversion of DHZ into aigialomycin C and is performed by the O-methyltransferase hmp5, the FAD-binding monooxygenase hmp7, and the cytochrome P450 monooxygenase hmp1. The wide substrate tolerance of the hmp5 and hmp7 implies that the reactions from DHZ to aigialomycin C can occur in any order. The steps from aigialomycin C to hypothemycin are less well established. The FAD-linked oxidoreductase hmp9 presumably catalyzes oxidation of the C-6' hydroxyl to a ketone. The timing of this oxidation is important, since the resulting enone functional group is a Michael acceptor that can react spontaneously with glutathione, an abundant metabolite in fungal cells. The glutathione S-transferase hmp2 catalyzes cis-trans isomerization of the 7',8' double bond with equilibrium favoring the trans isomer. The hpm6-encoded transporter might preferentially pump hypothemycin out of the cell relative to the trans isomer aigialomycin A. The cis-to-trans isomerization may be coupled with C-4' hydroxylation, since all known hypothemycin analogs containing the enone functional group also have hydroxyl groups at both C-4' and C-5'. This is Hypothemycin biosynthesis cluster protein hpm4 from Hypomyces subiculosus (Nectria subiculosa).